Here is a 101-residue protein sequence, read N- to C-terminus: Small ribosomal subunit protein uS10 (101 aa).

This sequence belongs to the universal ribosomal protein uS10 family. As to quaternary structure, part of the 30S ribosomal subunit.

In terms of biological role, involved in the binding of tRNA to the ribosomes. This Amoebophilus asiaticus (strain 5a2) protein is Small ribosomal subunit protein uS10.